Here is a 407-residue protein sequence, read N- to C-terminus: [Pyruvate dehydrogenase (acetyl-transferring)] kinase isozyme 2, mitochondrial (407 aa).

The region spanning 135–364 is the Histidine kinase domain; sequence LEYKDTYGDD…DAVIYLKALS (230 aa). Phosphotyrosine is present on residues Tyr-215 and Tyr-216. ATP contacts are provided by residues 251–258, Asp-290, 309–310, and 325–330; these read ELFKNAMR, ST, and GFGYGL. N6-succinyllysine is present on Lys-376.

Belongs to the PDK/BCKDK protein kinase family. Homodimer, and heterodimer with PDK1. Interacts with the pyruvate dehydrogenase complex subunit DLAT, and is part of the multimeric pyruvate dehydrogenase complex that contains multiple copies of pyruvate dehydrogenase (E1), dihydrolipoamide acetyltransferase (DLAT, E2) and lipoamide dehydrogenase (DLD, E3). In terms of tissue distribution, expressed in many tissues, with the highest level in heart and skeletal muscle, intermediate levels in brain, kidney, pancreas and liver, and low levels in placenta and lung.

The protein resides in the mitochondrion matrix. The enzyme catalyses L-seryl-[pyruvate dehydrogenase E1 alpha subunit] + ATP = O-phospho-L-seryl-[pyruvate dehydrogenase E1 alpha subunit] + ADP + H(+). Its activity is regulated as follows. Activity is enhanced by binding to the pyruvate dehydrogenase subunit DLAT. Inhibited by ADP and pyruvate; these compounds interfere with DLAT binding and thereby inhibit kinase activity. Inhibited by dichloroacetate. Inhibited by AZD7545; this compound interferes with DLAT binding and thereby inhibits kinase activity. Kinase that plays a key role in the regulation of glucose and fatty acid metabolism and homeostasis via phosphorylation of the pyruvate dehydrogenase subunits PDHA1 and PDHA2. This inhibits pyruvate dehydrogenase activity, and thereby regulates metabolite flux through the tricarboxylic acid cycle, down-regulates aerobic respiration and inhibits the formation of acetyl-coenzyme A from pyruvate. Inhibition of pyruvate dehydrogenase decreases glucose utilization and increases fat metabolism. Mediates cellular responses to insulin. Plays an important role in maintaining normal blood glucose levels and in metabolic adaptation to nutrient availability. Via its regulation of pyruvate dehydrogenase activity, plays an important role in maintaining normal blood pH and in preventing the accumulation of ketone bodies under starvation. Plays a role in the regulation of cell proliferation and in resistance to apoptosis under oxidative stress. Plays a role in p53/TP53-mediated apoptosis. The protein is [Pyruvate dehydrogenase (acetyl-transferring)] kinase isozyme 2, mitochondrial (PDK2) of Homo sapiens (Human).